A 382-amino-acid polypeptide reads, in one-letter code: Glutamyl-tRNA reductase (382 aa).

Substrate contacts are provided by residues 38-41 (TCNR), Ser85, 90-92 (ENQ), and Gln96. The Nucleophile role is filled by Cys39. 164-169 (GAGEIG) provides a ligand contact to NADP(+).

It belongs to the glutamyl-tRNA reductase family. Homodimer.

The catalysed reaction is (S)-4-amino-5-oxopentanoate + tRNA(Glu) + NADP(+) = L-glutamyl-tRNA(Glu) + NADPH + H(+). The protein operates within porphyrin-containing compound metabolism; protoporphyrin-IX biosynthesis; 5-aminolevulinate from L-glutamyl-tRNA(Glu): step 1/2. Its function is as follows. Catalyzes the NADPH-dependent reduction of glutamyl-tRNA(Glu) to glutamate 1-semialdehyde (GSA). This Methanococcus maripaludis (strain C7 / ATCC BAA-1331) protein is Glutamyl-tRNA reductase.